The sequence spans 195 residues: Flavin-dependent monooxygenase, reductase subunit HsaB (195 aa).

Residues 42–46 (PVGFA), 48–49 (QS), 63–65 (CPT), 69–70 (RS), and 95–96 (RF) contribute to the FAD site. 160–163 (FYRG) is a binding site for NAD(+).

It belongs to the non-flavoprotein flavin reductase family. As to quaternary structure, hsaAB monooxygenase consists of an oxygenase component HsaA and a reductase component HsaB.

The catalysed reaction is a reduced flavin + NAD(+) = an oxidized flavin + NADH + 2 H(+). It participates in lipid metabolism; steroid biosynthesis. Functionally, catalyzes the reduction of free flavins (FMN or FAD) by NADH. Subsequently, the reduced flavins diffuse to the HsaA oxygenase subunit. This is Flavin-dependent monooxygenase, reductase subunit HsaB (hsaB) from Rhodococcus jostii (strain RHA1).